The chain runs to 226 residues: ATP synthase F(0) complex subunit a (226 aa).

A run of 7 helical transmembrane segments spans residues 11-31 (SPELLMIPTALLSMLVPVLLI), 37-54 (LLGNRMTTAIAWLLMTIM), 72-92 (LTSLLLMILLSNLLGLLPYTF), 98-118 (LSMNMAMAIPLWMATIITGMT), 138-158 (IPFMIIIETISLLMRPLALGV), 178-198 (TLNFITSHITLSIMTYLLLFL), and 199-219 (LCILELAVACIQAYVFVLLII).

Belongs to the ATPase A chain family. Component of the ATP synthase complex composed at least of ATP5F1A/subunit alpha, ATP5F1B/subunit beta, ATP5MC1/subunit c (homooctomer), MT-ATP6/subunit a, MT-ATP8/subunit 8, ATP5ME/subunit e, ATP5MF/subunit f, ATP5MG/subunit g, ATP5MK/subunit k, ATP5MJ/subunit j, ATP5F1C/subunit gamma, ATP5F1D/subunit delta, ATP5F1E/subunit epsilon, ATP5PF/subunit F6, ATP5PB/subunit b, ATP5PD/subunit d, ATP5PO/subunit OSCP. ATP synthase complex consists of a soluble F(1) head domain (subunits alpha(3) and beta(3)) - the catalytic core - and a membrane F(0) domain - the membrane proton channel (subunits c, a, 8, e, f, g, k and j). These two domains are linked by a central stalk (subunits gamma, delta, and epsilon) rotating inside the F1 region and a stationary peripheral stalk (subunits F6, b, d, and OSCP). Interacts with DNAJC30; interaction is direct.

Its subcellular location is the mitochondrion inner membrane. The catalysed reaction is H(+)(in) = H(+)(out). Subunit a, of the mitochondrial membrane ATP synthase complex (F(1)F(0) ATP synthase or Complex V) that produces ATP from ADP in the presence of a proton gradient across the membrane which is generated by electron transport complexes of the respiratory chain. ATP synthase complex consist of a soluble F(1) head domain - the catalytic core - and a membrane F(1) domain - the membrane proton channel. These two domains are linked by a central stalk rotating inside the F(1) region and a stationary peripheral stalk. During catalysis, ATP synthesis in the catalytic domain of F(1) is coupled via a rotary mechanism of the central stalk subunits to proton translocation. With the subunit c (ATP5MC1), forms the proton-conducting channel in the F(0) domain, that contains two crucial half-channels (inlet and outlet) that facilitate proton movement from the mitochondrial intermembrane space (IMS) into the matrix. Protons are taken up via the inlet half-channel and released through the outlet half-channel, following a Grotthuss mechanism. This chain is ATP synthase F(0) complex subunit a, found in Lycodon semicarinatus (Ryukyu odd-tooth snake).